The sequence spans 376 residues: Thymidine kinase (376 aa).

Positions 1-44 (MASYPGHQHASAFDQAARSRGHSNRRTALRPRRQQEATEVRPEQ) are disordered. Basic residues predominate over residues 19-32 (SRGHSNRRTALRPR). Residues 33-44 (RQQEATEVRPEQ) are compositionally biased toward basic and acidic residues. An ATP-binding site is contributed by 56-63 (GPHGMGKT). Glu-83 acts as the Proton acceptor in catalysis. Tyr-101 and Gln-125 together coordinate substrate. Arg-216 contacts ATP. Arg-222 is a substrate binding site. The disordered stretch occupies residues 260 to 280 (GQLSGTAVPPQGAEPQSNAGP).

The protein belongs to the herpesviridae thymidine kinase family. In terms of assembly, homodimer.

The catalysed reaction is thymidine + ATP = dTMP + ADP + H(+). Catalyzes the transfer of the gamma-phospho group of ATP to thymidine to generate dTMP in the salvage pathway of pyrimidine synthesis. The dTMP serves as a substrate for DNA polymerase during viral DNA replication. Allows the virus to be reactivated and to grow in non-proliferative cells lacking a high concentration of phosphorylated nucleic acid precursors. The polypeptide is Thymidine kinase (Human herpesvirus 1 (strain HFEM) (HHV-1)).